A 268-amino-acid polypeptide reads, in one-letter code: Energy-coupling factor transporter transmembrane protein EcfT (268 aa).

5 consecutive transmembrane segments (helical) span residues 28-48 (FVFL…YLWV), 63-83 (LWFL…TLMM), 107-127 (ILEG…ATIM), 152-172 (LPVH…PTLM), and 248-268 (ISLT…YSGV).

It belongs to the energy-coupling factor EcfT family. Forms a stable energy-coupling factor (ECF) transporter complex composed of 2 membrane-embedded substrate-binding proteins (S component), 2 ATP-binding proteins (A component) and 2 transmembrane proteins (T component). May be able to interact with more than 1 S component at a time.

Its subcellular location is the cell membrane. Functionally, transmembrane (T) component of an energy-coupling factor (ECF) ABC-transporter complex. Unlike classic ABC transporters this ECF transporter provides the energy necessary to transport a number of different substrates. This chain is Energy-coupling factor transporter transmembrane protein EcfT, found in Staphylococcus aureus (strain 04-02981).